A 591-amino-acid chain; its full sequence is Probable translation initiation factor IF-2 (591 aa).

The tr-type G domain occupies 7–223; the sequence is LRTPIVCVMG…LLGLAQKFLE (217 aa). Residues 16-23 are G1; sequence GHVDHGKT. GTP is bound at residue 16 to 23; sequence GHVDHGKT. The G2 stretch occupies residues 41–45; sequence AITQH. Positions 78–81 are G3; that stretch reads DTPG. Residues 78–82 and 132–135 contribute to the GTP site; these read DTPGH and NKID. The tract at residues 132–135 is G4; the sequence is NKID. Positions 200-202 are G5; the sequence is SAF.

This sequence belongs to the TRAFAC class translation factor GTPase superfamily. Classic translation factor GTPase family. IF-2 subfamily.

Function in general translation initiation by promoting the binding of the formylmethionine-tRNA to ribosomes. Seems to function along with eIF-2. In Methanosarcina mazei (strain ATCC BAA-159 / DSM 3647 / Goe1 / Go1 / JCM 11833 / OCM 88) (Methanosarcina frisia), this protein is Probable translation initiation factor IF-2.